A 188-amino-acid chain; its full sequence is Molybdopterin synthase catalytic subunit (188 aa).

Residues 1–10 are compositionally biased toward polar residues; that stretch reads MSTSETSSYT. The interval 1–21 is disordered; it reads MSTSETSSYTPDIPSEPVTKT. Residues 123-124, Lys-139, and 146-148 each bind substrate; these read HR and KLE.

Belongs to the MoaE family. MOCS2B subfamily. Heterotetramer; composed of 2 small (MOCS2A) and 2 large (MOCS2B) subunits.

It localises to the cytoplasm. The catalysed reaction is 2 [molybdopterin-synthase sulfur-carrier protein]-C-terminal-Gly-aminoethanethioate + cyclic pyranopterin phosphate + H2O = molybdopterin + 2 [molybdopterin-synthase sulfur-carrier protein]-C-terminal Gly-Gly + 2 H(+). It functions in the pathway cofactor biosynthesis; molybdopterin biosynthesis. Functionally, catalytic subunit of the molybdopterin synthase complex, a complex that catalyzes the conversion of precursor Z into molybdopterin. Acts by mediating the incorporation of 2 sulfur atoms from thiocarboxylated MOCS2A into precursor Z to generate a dithiolene group. The chain is Molybdopterin synthase catalytic subunit from Phaeosphaeria nodorum (strain SN15 / ATCC MYA-4574 / FGSC 10173) (Glume blotch fungus).